Reading from the N-terminus, the 103-residue chain is Large ribosomal subunit protein bL21 (103 aa).

The protein belongs to the bacterial ribosomal protein bL21 family. As to quaternary structure, part of the 50S ribosomal subunit. Contacts protein L20.

In terms of biological role, this protein binds to 23S rRNA in the presence of protein L20. The chain is Large ribosomal subunit protein bL21 from Mycolicibacterium paratuberculosis (strain ATCC BAA-968 / K-10) (Mycobacterium paratuberculosis).